We begin with the raw amino-acid sequence, 484 residues long: tRNA sulfurtransferase (484 aa).

Positions 63 to 167 constitute a THUMP domain; that stretch reads ELFAERLAHI…RDKLYMVSQR (105 aa). ATP contacts are provided by residues 185–186, Lys-267, Gly-289, and Gln-298; that span reads LI. Cys-346 and Cys-458 form a disulfide bridge. Positions 406-484 constitute a Rhodanese domain; that stretch reads AAGNEVIIDI…GYNNVKVYRP (79 aa). Catalysis depends on Cys-458, which acts as the Cysteine persulfide intermediate.

Belongs to the ThiI family.

It localises to the cytoplasm. It carries out the reaction [ThiI sulfur-carrier protein]-S-sulfanyl-L-cysteine + a uridine in tRNA + 2 reduced [2Fe-2S]-[ferredoxin] + ATP + H(+) = [ThiI sulfur-carrier protein]-L-cysteine + a 4-thiouridine in tRNA + 2 oxidized [2Fe-2S]-[ferredoxin] + AMP + diphosphate. The enzyme catalyses [ThiS sulfur-carrier protein]-C-terminal Gly-Gly-AMP + S-sulfanyl-L-cysteinyl-[cysteine desulfurase] + AH2 = [ThiS sulfur-carrier protein]-C-terminal-Gly-aminoethanethioate + L-cysteinyl-[cysteine desulfurase] + A + AMP + 2 H(+). Its pathway is cofactor biosynthesis; thiamine diphosphate biosynthesis. In terms of biological role, catalyzes the ATP-dependent transfer of a sulfur to tRNA to produce 4-thiouridine in position 8 of tRNAs, which functions as a near-UV photosensor. Also catalyzes the transfer of sulfur to the sulfur carrier protein ThiS, forming ThiS-thiocarboxylate. This is a step in the synthesis of thiazole, in the thiamine biosynthesis pathway. The sulfur is donated as persulfide by IscS. The sequence is that of tRNA sulfurtransferase from Shewanella amazonensis (strain ATCC BAA-1098 / SB2B).